Reading from the N-terminus, the 64-residue chain is EWCGSNADCGDGQCCTGGSFNRHCQSLADDGTPCQKPNDYNEYKFGCPCKEGLICSPINYCQKK.

Cystine bridges form between Cys-3–Cys-15, Cys-9–Cys-24, Cys-14–Cys-47, Cys-34–Cys-55, and Cys-49–Cys-61.

Expressed by the venom gland.

Its subcellular location is the secreted. In terms of biological role, non-toxic to mice and insects. This Phoneutria reidyi (Brazilian Amazonian armed spider) protein is U9-ctenitoxin-Pr1a.